Consider the following 631-residue polypeptide: Phosphomethylpyrimidine synthase (631 aa).

Substrate-binding positions include N239, M268, Y297, H333, 353-355 (SRG), 394-397 (DGLR), and E433. H437 serves as a coordination point for Zn(2+). Y460 lines the substrate pocket. A Zn(2+)-binding site is contributed by H501. Residues C581, C584, and C589 each coordinate [4Fe-4S] cluster.

Belongs to the ThiC family. Homodimer. [4Fe-4S] cluster serves as cofactor.

The catalysed reaction is 5-amino-1-(5-phospho-beta-D-ribosyl)imidazole + S-adenosyl-L-methionine = 4-amino-2-methyl-5-(phosphooxymethyl)pyrimidine + CO + 5'-deoxyadenosine + formate + L-methionine + 3 H(+). Its pathway is cofactor biosynthesis; thiamine diphosphate biosynthesis. In terms of biological role, catalyzes the synthesis of the hydroxymethylpyrimidine phosphate (HMP-P) moiety of thiamine from aminoimidazole ribotide (AIR) in a radical S-adenosyl-L-methionine (SAM)-dependent reaction. In Salmonella dublin (strain CT_02021853), this protein is Phosphomethylpyrimidine synthase.